A 177-amino-acid chain; its full sequence is Endothelin-2 (177 aa).

Residues 1-23 form the signal peptide; it reads MPTALCSIALALLVALHEGKSQA. Residues 24-45 constitute a propeptide that is removed on maturation; the sequence is ATTPIPEQPAPLPRARGSHLRT. Cystine bridges form between Cys48-Cys62 and Cys50-Cys58. Positions 69-177 are excised as a propeptide; it reads VNTPGQTAPY…RPTHSRQRKR (109 aa). Residues 95 to 110 are endothelin-like; sequence CECYSARDPACATFCH. Residues 155 to 177 form a disordered region; the sequence is HFARQQQKPTRETRPTHSRQRKR.

It belongs to the endothelin/sarafotoxin family. Expressed in various organs including heart, lung, liver, kidney, gastrointestinal tract, uterus and ovary, but not in spleen. Within the gastrointestinal tract, gene expression was detected in rumen, a ruminant-specific digestive organ, as well as stomach, duodenum and colon.

The protein localises to the secreted. Endothelins are endothelium-derived vasoconstrictor peptides. The polypeptide is Endothelin-2 (EDN2) (Bos taurus (Bovine)).